The chain runs to 454 residues: Bifunctional protein GlmU (454 aa).

Residues 1-227 (MTQLSVVILA…FMEVEGANNR (227 aa)) form a pyrophosphorylase region. Residues 9–12 (LAAG), lysine 23, glutamine 74, 79–80 (GT), 101–103 (YGD), glycine 138, glutamate 152, asparagine 167, and asparagine 225 contribute to the UDP-N-acetyl-alpha-D-glucosamine site. Aspartate 103 lines the Mg(2+) pocket. Position 225 (asparagine 225) interacts with Mg(2+). The linker stretch occupies residues 228-248 (LQLAALERFYQKTQAEKLLLA). Positions 249–454 (GVRLIDQARF…QGWQRPTKKK (206 aa)) are N-acetyltransferase. Positions 331 and 349 each coordinate UDP-N-acetyl-alpha-D-glucosamine. Histidine 361 (proton acceptor) is an active-site residue. 2 residues coordinate UDP-N-acetyl-alpha-D-glucosamine: tyrosine 364 and asparagine 375. Residues alanine 378, 384–385 (NY), serine 403, alanine 421, and arginine 438 each bind acetyl-CoA.

The protein in the N-terminal section; belongs to the N-acetylglucosamine-1-phosphate uridyltransferase family. This sequence in the C-terminal section; belongs to the transferase hexapeptide repeat family. Homotrimer. Mg(2+) is required as a cofactor.

It localises to the cytoplasm. The enzyme catalyses alpha-D-glucosamine 1-phosphate + acetyl-CoA = N-acetyl-alpha-D-glucosamine 1-phosphate + CoA + H(+). It carries out the reaction N-acetyl-alpha-D-glucosamine 1-phosphate + UTP + H(+) = UDP-N-acetyl-alpha-D-glucosamine + diphosphate. It functions in the pathway nucleotide-sugar biosynthesis; UDP-N-acetyl-alpha-D-glucosamine biosynthesis; N-acetyl-alpha-D-glucosamine 1-phosphate from alpha-D-glucosamine 6-phosphate (route II): step 2/2. It participates in nucleotide-sugar biosynthesis; UDP-N-acetyl-alpha-D-glucosamine biosynthesis; UDP-N-acetyl-alpha-D-glucosamine from N-acetyl-alpha-D-glucosamine 1-phosphate: step 1/1. Its pathway is bacterial outer membrane biogenesis; LPS lipid A biosynthesis. Catalyzes the last two sequential reactions in the de novo biosynthetic pathway for UDP-N-acetylglucosamine (UDP-GlcNAc). The C-terminal domain catalyzes the transfer of acetyl group from acetyl coenzyme A to glucosamine-1-phosphate (GlcN-1-P) to produce N-acetylglucosamine-1-phosphate (GlcNAc-1-P), which is converted into UDP-GlcNAc by the transfer of uridine 5-monophosphate (from uridine 5-triphosphate), a reaction catalyzed by the N-terminal domain. The protein is Bifunctional protein GlmU of Actinobacillus pleuropneumoniae serotype 7 (strain AP76).